We begin with the raw amino-acid sequence, 272 residues long: Indole-3-glycerol phosphate synthase (272 aa).

It belongs to the TrpC family.

The enzyme catalyses 1-(2-carboxyphenylamino)-1-deoxy-D-ribulose 5-phosphate + H(+) = (1S,2R)-1-C-(indol-3-yl)glycerol 3-phosphate + CO2 + H2O. Its pathway is amino-acid biosynthesis; L-tryptophan biosynthesis; L-tryptophan from chorismate: step 4/5. The protein is Indole-3-glycerol phosphate synthase of Mycolicibacterium smegmatis (strain ATCC 700084 / mc(2)155) (Mycobacterium smegmatis).